Here is a 682-residue protein sequence, read N- to C-terminus: DNA-directed RNA polymerase subunit beta' (682 aa).

Zn(2+) contacts are provided by Cys-69, Cys-71, Cys-87, and Cys-90. Residues Asp-489, Asp-491, and Asp-493 each contribute to the Mg(2+) site.

Belongs to the RNA polymerase beta' chain family. RpoC1 subfamily. As to quaternary structure, in plastids the minimal PEP RNA polymerase catalytic core is composed of four subunits: alpha, beta, beta', and beta''. When a (nuclear-encoded) sigma factor is associated with the core the holoenzyme is formed, which can initiate transcription. It depends on Mg(2+) as a cofactor. Zn(2+) is required as a cofactor.

The protein localises to the plastid. It localises to the chloroplast. The catalysed reaction is RNA(n) + a ribonucleoside 5'-triphosphate = RNA(n+1) + diphosphate. Functionally, DNA-dependent RNA polymerase catalyzes the transcription of DNA into RNA using the four ribonucleoside triphosphates as substrates. This chain is DNA-directed RNA polymerase subunit beta', found in Vitis vinifera (Grape).